The following is a 1334-amino-acid chain: MPSSSDELIFFVNGKKVIEKNPVPEMNLLFYVRKVLHLTGTKYSCGGGGCGACTVMISRYNPESKKIYHYPATACLVPVCSLHGAAVTTVEGVGSIKRRIHPVQERLAKCHGTQCGFCSPGMVMSIYTLLRNHPEPTPDQITEALGGNLCRCTGYRPIVESGKTFSPESSVCQMKGSGKCCMDLDEGCSESTKERMCTKLYNEDEFQPLDPSQEPIFPPELIRMAEDPHKRRLTFQGERTIWIMPVTLNGLLELKASYPEAPLVMGNTAVGPGMKFNNEFHPVFISPLGLPELNLVDTANSGGVTIGARHSLAQMKDILHSLTLEQPKEKTKTHQALLKHLRTLAGPQIRNMATLGGHVVSRPDFSDLNPILAAGNATINVISKEGQRQIPLNGPFLERLPEASLKPEEVALSVFIPYSGQWQYVSGLRLAQRQENAFAIVNAGMSVEFEEGTNTIKDLQMLFGSVAPTVVSASQTCKQLIGRQWDDQMLSDACQLVLEEIRIPPDAEGGMVEYRRTLIISLLFKFYLKVRRWLSEMDPQKFPDIPEKFVSALDDLPIETPQGIQMFQCVDPNQPEQDPVGHPIMHQSGIKHATGEAKFVDDMPRINQELCLTVVTSTRAHAKITSIDVSEALAYPGVVDVITAEDVPGDNNHSGEIFYAQNEVICVGQIICTVAADTYIHAKEAAKRVKITYDDIEPAIITIEQALEHNSFLSSEKKIEQGNVDYAFKHVDHIIEGEIHVEGQEHFYMETQTILAIPQTEDKEMVLHVGTQFPTHVQEYVSAALKVPRNRIACQMKRTGGAFGGKVTKPALLGAVCAVAAHKTGRPIRFILDRSNDMLITAGRHPLLGKYKIGFMNNGKIKAADVEYYTNGGCTPDESEMVIEFIVLKSENAYHIPNFRCRGRACKTNLPSNTAFRGFGFPQATVVVEAYIAAVASKCNLLPEEIREINMYKQISKTAYKQTFNPEPLRRCWKECLQKSSFFARKQAAEEFNKNNYWKKKGLAVVPMKFSVAVPMAFYNQAAALVHIFLDGSVLLTHGGCELGQGLHTKMIQVASRELNIPKSYVHLVETSTVTVPNAVFTAGSMGADINGKAVQNACQTLLDRLQPIIKKNPKGKWEEWVKKAFEESISLSATGYFKGYQTNMDWEKEEGDPYPYYVYGAACSEVEVDCLTGAHKLLRTDIFMDAAFSINPALDIGQVEGAFIQGMGFYTIEELKYSPKGVLYSRGPDDYKIPTVTEIPEEFYVTMVRSRNPIAIYSSKGLGEAGMFLGSSVLFAIYDAVTTARKERGLSDIFPLNSPATPEVIRMACKDQFTDMIPRDDPSTFTPWSIHVS.

In terms of domain architecture, 2Fe-2S ferredoxin-type spans Asp6–Val93. Residues Cys45, Cys50, Cys53, and Cys75 each contribute to the [2Fe-2S] cluster site. Residue Gln114 participates in Mo-molybdopterin binding. 4 residues coordinate [2Fe-2S] cluster: Cys115, Cys118, Cys150, and Cys152. A Mo-molybdopterin-binding site is contributed by Cys152. The FAD-binding PCMH-type domain occupies Phe235 to Gln421. FAD contacts are provided by residues Leu263 to Val270, Ala345, Thr354, His358, Asp367, and Ala411. Mo-molybdopterin contacts are provided by residues Ala802, Ala802–Phe803, Leu1043, Gly1084–Gly1087, Gln1199, and Leu1263. Catalysis depends on Glu1265, which acts as the Proton acceptor; for azaheterocycle hydroxylase activity.

Belongs to the xanthine dehydrogenase family. As to quaternary structure, homodimer. It depends on [2Fe-2S] cluster as a cofactor. FAD is required as a cofactor. The cofactor is Mo-molybdopterin.

It localises to the cytoplasm. It catalyses the reaction an aldehyde + O2 + H2O = a carboxylate + H2O2 + H(+). It carries out the reaction retinal + O2 + H2O = retinoate + H2O2 + H(+). Its function is as follows. Aldehyde oxidase able to catalyze the oxidation of retinaldehyde into retinoate. Acts as a negative modulator of the epidermal trophism. May be able to oxidize a wide variety of aldehydes into their corresponding carboxylates and to hydroxylate azaheterocycles. The sequence is that of Aldehyde oxidase 4 (Aox4) from Rattus norvegicus (Rat).